The sequence spans 319 residues: ATP-dependent 6-phosphofructokinase (319 aa).

Gly11 contributes to the ATP binding site. ADP is bound at residue 21–25 (RAVTR). Residues 72–73 (RF) and 102–105 (GDGS) contribute to the ATP site. Asp103 contacts Mg(2+). Position 125–127 (125–127 (SID)) interacts with substrate. The active-site Proton acceptor is the Asp127. Position 154 (Arg154) interacts with ADP. Residues Arg162 and 169–171 (MGR) contribute to the substrate site. ADP contacts are provided by residues 185 to 187 (GAD) and 213 to 215 (KKH). Residues Glu222, Arg243, and 249–252 (HMQR) each bind substrate.

The protein belongs to the phosphofructokinase type A (PFKA) family. ATP-dependent PFK group I subfamily. Prokaryotic clade 'B1' sub-subfamily. Homotetramer. Requires Mg(2+) as cofactor.

It localises to the cytoplasm. The catalysed reaction is beta-D-fructose 6-phosphate + ATP = beta-D-fructose 1,6-bisphosphate + ADP + H(+). It participates in carbohydrate degradation; glycolysis; D-glyceraldehyde 3-phosphate and glycerone phosphate from D-glucose: step 3/4. Allosterically activated by ADP and other diphosphonucleosides, and allosterically inhibited by phosphoenolpyruvate. Catalyzes the phosphorylation of D-fructose 6-phosphate to fructose 1,6-bisphosphate by ATP, the first committing step of glycolysis. The polypeptide is ATP-dependent 6-phosphofructokinase (Lactobacillus johnsonii (strain CNCM I-12250 / La1 / NCC 533)).